The following is a 434-amino-acid chain: Enolase (434 aa).

Residue Gln-163 participates in (2R)-2-phosphoglycerate binding. The active-site Proton donor is Glu-205. The Mg(2+) site is built by Asp-242, Glu-291, and Asp-318. Residues Lys-343, Arg-372, Ser-373, and Lys-394 each contribute to the (2R)-2-phosphoglycerate site. Lys-343 acts as the Proton acceptor in catalysis.

It belongs to the enolase family. The cofactor is Mg(2+).

It localises to the cytoplasm. Its subcellular location is the secreted. The protein localises to the cell surface. It catalyses the reaction (2R)-2-phosphoglycerate = phosphoenolpyruvate + H2O. The protein operates within carbohydrate degradation; glycolysis; pyruvate from D-glyceraldehyde 3-phosphate: step 4/5. Functionally, catalyzes the reversible conversion of 2-phosphoglycerate (2-PG) into phosphoenolpyruvate (PEP). It is essential for the degradation of carbohydrates via glycolysis. This chain is Enolase, found in Streptococcus intermedius.